Reading from the N-terminus, the 2315-residue chain is Receptor-type tyrosine-protein phosphatase zeta (2315 aa).

The signal sequence occupies residues 1 to 24; the sequence is MRILKRFLACIQLLCVCRLDWANG. Residues 25–1636 lie on the Extracellular side of the membrane; that stretch reads YYRQQRKLVE…LAEGLESEKK (1612 aa). The 265-residue stretch at 36-300 folds into the Alpha-carbonic anhydrase domain; the sequence is IGWSYTGALN…KFSRQVFSSY (265 aa). Intrachain disulfides connect cysteine 56–cysteine 240 and cysteine 133–cysteine 264. N-linked (GlcNAc...) asparagine glycosylation is found at asparagine 105, asparagine 134, asparagine 223, asparagine 232, asparagine 324, and asparagine 381. One can recognise a Fibronectin type-III domain in the interval 314–413; the sequence is EPENVQADPE…LIVDMPTDNP (100 aa). 2 disordered regions span residues 442-462 and 477-507; these read IVNPGRDSATNQIRKKEPQIS and AKTNRSPTRGSEFSGKGDVPNTSLNSTSQPV. A compositionally biased stretch (polar residues) spans 496–507; that stretch reads PNTSLNSTSQPV. 3 N-linked (GlcNAc...) asparagine glycosylation sites follow: asparagine 497, asparagine 501, and asparagine 552. Residue serine 587 is glycosylated (O-linked (Xyl...) (chondroitin sulfate) serine). Asparagine 602 and asparagine 629 each carry an N-linked (GlcNAc...) asparagine glycan. A disordered region spans residues 628–650; sequence RNASEDSTSSGSEESLKDPSMEG. A Phosphoserine; alternate modification is found at serine 637. The O-linked (Xyl...) (chondroitin sulfate) serine; alternate glycan is linked to serine 637. The residue at position 639 (serine 639) is a Phosphoserine. Asparagine 677 carries N-linked (GlcNAc...) asparagine glycosylation. O-linked (Xyl...) (chondroitin sulfate) serine glycosylation occurs at serine 997. Asparagine 1017, asparagine 1050, asparagine 1082, and asparagine 1122 each carry an N-linked (GlcNAc...) asparagine glycan. Polar residues predominate over residues 1123–1138; that stretch reads FSVQPTHTVSQASGDT. 4 disordered regions span residues 1123–1160, 1397–1523, 1543–1572, and 1584–1621; these read FSVQPTHTVSQASGDTSLKPVLSANSEPASSDPASSEM, KATS…EEND, LTSDEESGSGQGTSDSLNENETSTDFSFAD, and AGDSEITPGFPQSPTSSVTSENSEVFHVSEAEASNSSH. The segment covering 1145–1159 has biased composition (low complexity); it reads SANSEPASSDPASSE. Residues 1417–1432 show a composition bias toward acidic residues; the sequence is EDGDTDDDGDDDDDDR. The segment covering 1450–1465 has biased composition (basic and acidic residues); it reads ESQEKVMNDSDTHENS. An N-linked (GlcNAc...) asparagine glycan is attached at asparagine 1457. 2 stretches are compositionally biased toward polar residues: residues 1466-1479 and 1487-1513; these read LMDQNNPISYSLSE and VTSVSSDSQTGMDRSPGKSPSANGLSQ. Residues serine 1549 and serine 1551 are each glycosylated (O-linked (Xyl...) (chondroitin sulfate) serine). Polar residues-rich tracts occupy residues 1554–1572 and 1593–1606; these read GTSDSLNENETSTDFSFAD and FPQSPTSSVTSENS. Residue asparagine 1562 is glycosylated (N-linked (GlcNAc...) asparagine). A glycan (N-linked (GlcNAc...) asparagine) is linked at asparagine 1618. The helical transmembrane segment at 1637-1662 threads the bilayer; sequence AVIPLVIVSALTFICLVVLVGILIYW. Over 1663–2315 the chain is Cytoplasmic; the sequence is RKCFQTAHFY…NIAESLESLV (653 aa). A phosphothreonine mark is found at threonine 1684 and threonine 1687. 2 consecutive Tyrosine-protein phosphatase domains span residues 1717 to 1992 and 2023 to 2282; these read FTEE…LVEA and LEKQ…ILSL. Residues aspartate 1901, 1933–1939, and glutamine 1977 contribute to the substrate site; that span reads CSAGVGR. Cysteine 1933 functions as the Phosphocysteine intermediate in the catalytic mechanism. Serine 2055 is modified (phosphoserine).

It belongs to the protein-tyrosine phosphatase family. Receptor class 5 subfamily. In terms of assembly, the carbonic-anhydrase like domain interacts with CNTN1 (contactin). Interacts with PTN. Interaction with PTN promotes formation of homooligomers; oligomerization impairs phosphatase activity. Interacts (via chondroitin sulfate chains) with MDK (via C-terminal); this interaction is inhibited by PTN; this interaction promotes neuronal migration. Specifically expressed in the central nervous system, where it is localized in the Purkinje cell layer of the cerebellum, the dentate gyrus, and the subependymal layer of the anterior horn of the lateral ventricle. Developmentally regulated in the brain.

Its subcellular location is the cell membrane. The protein resides in the secreted. It catalyses the reaction O-phospho-L-tyrosyl-[protein] + H2O = L-tyrosyl-[protein] + phosphate. Protein tyrosine phosphatase that negatively regulates oligodendrocyte precursor proliferation in the embryonic spinal cord. Required for normal differentiation of the precursor cells into mature, fully myelinating oligodendrocytes. May play a role in protecting oligondendrocytes against apoptosis. May play a role in the establishment of contextual memory, probably via the dephosphorylation of proteins that are part of important signaling cascades. The protein is Receptor-type tyrosine-protein phosphatase zeta (PTPRZ1) of Homo sapiens (Human).